The sequence spans 346 residues: T-box protein 12 (346 aa).

Acidic residues predominate over residues 33 to 48; the sequence is DEEDVEVDVEDVDDVD. Residues 33 to 66 form a disordered region; it reads DEEDVEVDVEDVDDVDLSSIPSKSPERSRGRPKI. A DNA-binding region (T-box) is located at residues 86-268; the sequence is LWAKFFDLGT…KNPFAKGFRD (183 aa).

The protein resides in the nucleus. In terms of biological role, transcription factor. Involved in cell fate determination; required to pattern the posterior hindgut. Involved in motor neuron fate determination and maintenance, acting as a transcriptional repressor to counteract gene activation by transcription factor unc-3 in a subset of motor neurons. Required throughout development to repress transcription by unc-3, probably acting by binding to specific promoter elements. Represses expression of VA and VB motor neuron-specific effector genes, such as DEG/ENaC channel del-1 and the innexin inx-12, in DA and DB motor neurons. Represses expression of transcription factor bnc-1, perhaps acting directly, in DA and DB motor neurons. The protein is T-box protein 12 (mab-9) of Caenorhabditis elegans.